The following is a 158-amino-acid chain: Protein Smg homolog (158 aa).

It belongs to the Smg family.

The protein is Protein Smg homolog of Shewanella oneidensis (strain ATCC 700550 / JCM 31522 / CIP 106686 / LMG 19005 / NCIMB 14063 / MR-1).